The primary structure comprises 398 residues: Phytoene synthase 2, chloroplastic (398 aa).

The N-terminal 80 residues, 1 to 80 (MASSSSAAAL…EEAVYEVVLR (80 aa)), are a transit peptide targeting the chloroplast.

The protein belongs to the phytoene/squalene synthase family. Expressed in leaves and endosperm. Expressed in developing leaves.

It localises to the plastid. The protein resides in the chloroplast membrane. It is found in the chloroplast. Its subcellular location is the plastoglobule. It carries out the reaction 2 (2E,6E,10E)-geranylgeranyl diphosphate = 15-cis-phytoene + 2 diphosphate. Its function is as follows. Catalyzes the conversion of geranylgeranyl diphosphate to phytoene. Mediates the first committed step in carotenoid biosynthesis. The protein is Phytoene synthase 2, chloroplastic of Oryza sativa subsp. japonica (Rice).